The chain runs to 267 residues: Nanos homolog 1 (267 aa).

Residues 40 to 56 (FSSWNDYLGLATLITRA) are essential for its translational repressor activity. The disordered stretch occupies residues 57–94 (SDRGSPHEGPGPTAAGPTMGPPEDDEDDDGEEPEAGGR). Acidic residues predominate over residues 78-90 (PEDDEDDDGEEPE). The Nanos-type zinc finger occupies 188–242 (VCVFCRNNKEAVALYTTHILKGPDGRVLCPVLRRYTCPLCGASGDNAHTIKYCPL). The Zn(2+) site is built by cysteine 189, cysteine 192, histidine 205, cysteine 216, cysteine 224, cysteine 227, histidine 235, and cysteine 240. Short sequence motifs (C2HC) lie at residues 189–216 (CVFC…RVLC) and 224–240 (CPLC…IKYC). Residues 243–267 (SKVPPPTVRPPPRSNRDSLPSKKLR) form a disordered region. Over residues 244–255 (KVPPPTVRPPPR) the composition is skewed to pro residues. The span at 256–267 (SNRDSLPSKKLR) shows a compositional bias: basic and acidic residues.

Belongs to the nanos family. As to quaternary structure, interacts with PUM2, SNAPIN and CTNNB1. Interacts (via N-terminal region) with CTNND1. Interacts with DDX20 (via N-terminal region). As to expression, expressed in the oocyte. Transiently expressed in eight-cell embryos. At 12.5 dpc, it is re-expressed in the central nervous system and the expression continues in the adult brain, in which the hippocampal formation is the predominant region. Expressed in the seminiferous tubules of mature testis, but not in the primordial germ cells.

It localises to the cytoplasm. The protein resides in the perinuclear region. Functionally, may act as a translational repressor which regulates translation of specific mRNAs by forming a complex with PUM2 that associates with the 3'-UTR of mRNA targets. Capable of interfering with the proadhesive and anti-invasive functions of E-cadherin. Up-regulates the production of MMP14 to promote tumor cell invasion. Not essential for normal development. The chain is Nanos homolog 1 (Nanos1) from Mus musculus (Mouse).